Consider the following 169-residue polypeptide: Crossover junction endodeoxyribonuclease RuvC (169 aa).

Active-site residues include Asp-11, Glu-71, and Asp-143. 3 residues coordinate Mg(2+): Asp-11, Glu-71, and Asp-143.

This sequence belongs to the RuvC family. Homodimer which binds Holliday junction (HJ) DNA. The HJ becomes 2-fold symmetrical on binding to RuvC with unstacked arms; it has a different conformation from HJ DNA in complex with RuvA. In the full resolvosome a probable DNA-RuvA(4)-RuvB(12)-RuvC(2) complex forms which resolves the HJ. Requires Mg(2+) as cofactor.

It is found in the cytoplasm. It carries out the reaction Endonucleolytic cleavage at a junction such as a reciprocal single-stranded crossover between two homologous DNA duplexes (Holliday junction).. Its function is as follows. The RuvA-RuvB-RuvC complex processes Holliday junction (HJ) DNA during genetic recombination and DNA repair. Endonuclease that resolves HJ intermediates. Cleaves cruciform DNA by making single-stranded nicks across the HJ at symmetrical positions within the homologous arms, yielding a 5'-phosphate and a 3'-hydroxyl group; requires a central core of homology in the junction. The consensus cleavage sequence is 5'-(A/T)TT(C/G)-3'. Cleavage occurs on the 3'-side of the TT dinucleotide at the point of strand exchange. HJ branch migration catalyzed by RuvA-RuvB allows RuvC to scan DNA until it finds its consensus sequence, where it cleaves and resolves the cruciform DNA. The protein is Crossover junction endodeoxyribonuclease RuvC of Rhizobium leguminosarum bv. trifolii (strain WSM2304).